We begin with the raw amino-acid sequence, 316 residues long: Apolipoprotein E (316 aa).

Residues 1 to 18 form the signal peptide; it reads MKVLWVALVVALLAGCQA. Repeat copies occupy residues 79–100, 101–122, 123–144, 145–166, 167–188, 189–210, 211–232, and 233–254. Residues 79–254 are 8 X 22 AA approximate tandem repeats; that stretch reads VLMEETMKEV…RLDKMRQQLE (176 aa). Residue Met-142 is modified to Methionine sulfoxide. At Ser-146 the chain carries Phosphoserine. Positions 157–167 are LDL and other lipoprotein receptors binding; sequence HLRKLRKRLLR. 161-164 contributes to the heparin binding site; it reads LRKR. The interval 209 to 289 is lipid-binding and lipoprotein association; that stretch reads AATLSTQVGQ…SWFEPLVEDM (81 aa). 228 to 235 is a heparin binding site; that stretch reads RQKLHGRL. Positions 265-316 are homooligomerization; sequence SQIRLQAEAFQARLRSWFEPLVEDMQRQWAGLVEKVQLALHLSPTSPPSENH. Residues 277–289 form a specificity for association with VLDL region; it reads RLRSWFEPLVEDM.

The protein belongs to the apolipoprotein A1/A4/E family. Homotetramer. May interact with ABCA1; functionally associated with ABCA1 in the biogenesis of HDLs. May interact with APP/A4 amyloid-beta peptide; the interaction is extremely stable in vitro but its physiological significance is unclear. May interact with MAPT. May interact with MAP2. In the cerebrospinal fluid, interacts with secreted SORL1. Interacts with PMEL; this allows the loading of PMEL luminal fragment on ILVs to induce fibril nucleation. APOE exists as multiple glycosylated and sialylated glycoforms within cells and in plasma. The extent of glycosylation and sialylation are tissue and context specific. Post-translationally, glycated in plasma VLDL. In terms of processing, phosphorylated by FAM20C in the extracellular medium.

It localises to the secreted. The protein resides in the extracellular space. It is found in the extracellular matrix. Its subcellular location is the extracellular vesicle. The protein localises to the endosome. It localises to the multivesicular body. Functionally, APOE is an apolipoprotein, a protein associating with lipid particles, that mainly functions in lipoprotein-mediated lipid transport between organs via the plasma and interstitial fluids. APOE is a core component of plasma lipoproteins and is involved in their production, conversion and clearance. Apolipoproteins are amphipathic molecules that interact both with lipids of the lipoprotein particle core and the aqueous environment of the plasma. As such, APOE associates with chylomicrons, chylomicron remnants, very low density lipoproteins (VLDL) and intermediate density lipoproteins (IDL) but shows a preferential binding to high-density lipoproteins (HDL). It also binds a wide range of cellular receptors including the LDL receptor/LDLR and the very low-density lipoprotein receptor/VLDLR that mediate the cellular uptake of the APOE-containing lipoprotein particles. Finally, APOE also has a heparin-binding activity and binds heparan-sulfate proteoglycans on the surface of cells, a property that supports the capture and the receptor-mediated uptake of APOE-containing lipoproteins by cells. This Ovis aries (Sheep) protein is Apolipoprotein E (APOE).